The sequence spans 277 residues: Large ribosomal subunit protein uL2 (277 aa).

The disordered stretch occupies residues 219-277 (TVRGSVMNPNDHPHGGGEGRSPIGHPSPRTPWGKPALGYKTRKNKKYSDRFIVKRRHDK).

This sequence belongs to the universal ribosomal protein uL2 family. Part of the 50S ribosomal subunit. Forms a bridge to the 30S subunit in the 70S ribosome.

Functionally, one of the primary rRNA binding proteins. Required for association of the 30S and 50S subunits to form the 70S ribosome, for tRNA binding and peptide bond formation. It has been suggested to have peptidyltransferase activity; this is somewhat controversial. Makes several contacts with the 16S rRNA in the 70S ribosome. This chain is Large ribosomal subunit protein uL2, found in Clostridium botulinum (strain 657 / Type Ba4).